The primary structure comprises 299 residues: Bifunctional protein FolD (299 aa).

NADP(+) contacts are provided by residues 179–181 (GPG) and I245.

This sequence belongs to the tetrahydrofolate dehydrogenase/cyclohydrolase family. Homodimer.

It catalyses the reaction (6R)-5,10-methylene-5,6,7,8-tetrahydrofolate + NADP(+) = (6R)-5,10-methenyltetrahydrofolate + NADPH. It carries out the reaction (6R)-5,10-methenyltetrahydrofolate + H2O = (6R)-10-formyltetrahydrofolate + H(+). Its pathway is one-carbon metabolism; tetrahydrofolate interconversion. In terms of biological role, catalyzes the oxidation of 5,10-methylenetetrahydrofolate to 5,10-methenyltetrahydrofolate and then the hydrolysis of 5,10-methenyltetrahydrofolate to 10-formyltetrahydrofolate. The sequence is that of Bifunctional protein FolD from Deinococcus radiodurans (strain ATCC 13939 / DSM 20539 / JCM 16871 / CCUG 27074 / LMG 4051 / NBRC 15346 / NCIMB 9279 / VKM B-1422 / R1).